The chain runs to 1082 residues: Protein argonaute 1A (1082 aa).

Disordered regions lie at residues 17–148 and 187–208; these read MMRK…ASQD and GQSPTSQAIQPAPPSSKSVRFP. A compositionally biased stretch (polar residues) spans 29 to 38; it reads GESSGTQQAT. Over residues 72–100 the composition is skewed to gly residues; sequence GRGGGQHQGRGGRYQGRGGPTSHQPGGGP. Positions 420 to 533 constitute a PAZ domain; sequence PVIDFVAQLL…LPMEVCKIVE (114 aa). The Piwi domain maps to 709 to 1030; the sequence is LLIAILPDNN…AAFRARFYME (322 aa). Positions 1036–1065 are disordered; the sequence is SGSMASGAHTRGGGPLPGARSTKPAGNVAV.

Belongs to the argonaute family. Ago subfamily.

Functionally, probably involved in the RNA silencing pathway. May bind to short RNAs such as microRNAs (miRNAs) or short interfering RNAs (siRNAs), and represses the translation of mRNAs which are complementary to them. In Oryza sativa subsp. japonica (Rice), this protein is Protein argonaute 1A (AGO1A).